Here is a 688-residue protein sequence, read N- to C-terminus: Eukaryotic translation initiation factor 3 subunit B (688 aa).

Residues 1-43 (MLESERPERDMEEEGEESNEEEEEEGMSFSDPEGFEDDISDEE) are disordered. Acidic residues-rich tracts occupy residues 10–26 (DMEE…EEEG) and 33–43 (EGFEDDISDEE). One can recognise an RRM domain in the interval 61-144 (SVIVVDNVPQ…HTFRVNLFTD (84 aa)). 8 WD repeats span residues 164 to 206 (KDFG…VPVE), 208 to 246 (RARW…QIQR), 248 to 293 (SHQG…NKRG), 297 to 335 (ESSA…LLDK), 338 to 373 (LKIT…TLMQ), 436 to 492 (EMKD…TIFW), 525 to 570 (AEHY…LQKN), and 635 to 680 (TYRE…FFVT). Residues 589–640 (SQDQIKQIKKDLKKYSKIFEQKDRLSQTKASKELIERRRAMMEEYKTYREMA) are a coiled coil.

Belongs to the eIF-3 subunit B family. In terms of assembly, component of the eukaryotic translation initiation factor 3 (eIF-3) complex, which is composed of 13 subunits: eif3a, eif3b, eif3c, eif3d, eif3e, eif3f, eif3g, eif3h, eif3i, eif3j, eif3k, eif3l and eif3m.

The protein localises to the cytoplasm. It localises to the stress granule. Functionally, RNA-binding component of the eukaryotic translation initiation factor 3 (eIF-3) complex, which is involved in protein synthesis of a specialized repertoire of mRNAs and, together with other initiation factors, stimulates binding of mRNA and methionyl-tRNAi to the 40S ribosome. The eIF-3 complex specifically targets and initiates translation of a subset of mRNAs involved in cell proliferation. This chain is Eukaryotic translation initiation factor 3 subunit B (eif3b), found in Xenopus laevis (African clawed frog).